The sequence spans 470 residues: ATP synthase subunit beta (470 aa).

157 to 164 (GGAGVGKT) is a binding site for ATP.

This sequence belongs to the ATPase alpha/beta chains family. As to quaternary structure, F-type ATPases have 2 components, CF(1) - the catalytic core - and CF(0) - the membrane proton channel. CF(1) has five subunits: alpha(3), beta(3), gamma(1), delta(1), epsilon(1). CF(0) has three main subunits: a(1), b(2) and c(9-12). The alpha and beta chains form an alternating ring which encloses part of the gamma chain. CF(1) is attached to CF(0) by a central stalk formed by the gamma and epsilon chains, while a peripheral stalk is formed by the delta and b chains.

It is found in the cell inner membrane. It carries out the reaction ATP + H2O + 4 H(+)(in) = ADP + phosphate + 5 H(+)(out). In terms of biological role, produces ATP from ADP in the presence of a proton gradient across the membrane. The catalytic sites are hosted primarily by the beta subunits. The polypeptide is ATP synthase subunit beta (Geobacter metallireducens (strain ATCC 53774 / DSM 7210 / GS-15)).